Reading from the N-terminus, the 507-residue chain is RNA-binding protein Nova-1 (507 aa).

Residues 1–44 (MMAAAPIQQNGTHTGVPIDLDPPDSRKRPLEAPPEAGSTKRTNT) are disordered. A Bipartite nuclear localization signal motif is present at residues 27-43 (KRPLEAPPEAGSTKRTN). The 68-residue stretch at 49–116 (QYFLKVLIPS…EALNAVHGFI (68 aa)) folds into the KH 1 domain. Residues 139–171 (QTTVNPDRIKQTLPSSPTTTKSSPSDPMTTSRA) are disordered. Low complexity predominate over residues 150–169 (TLPSSPTTTKSSPSDPMTTS). S154 is subject to Phosphoserine. 2 KH domains span residues 171–237 (ANQV…VELI) and 421–488 (KDVV…QYLI). Positions 419–503 (GSKDVVEIAV…YEQGVRAANP (85 aa)) are required for RNA binding.

Interacts with PTBP2; the interaction is direct. Expressed in cerebellum, brain stem, hippocampus, and frontal cortex.

It localises to the nucleus. Functions to regulate alternative splicing in neurons by binding pre-mRNA in a sequence-specific manner to activate exon inclusion or exclusion. It binds specifically to the sequences 5'-YCAY-3' and regulates splicing in only a subset of regulated exons. Binding to an exonic 5'-YCAY-3' cluster changes the protein complexes assembled on pre-mRNA, blocking U1 snRNP binding and exon inclusion, whereas binding to an intronic 5'-YCAY-3' cluster enhances spliceosome assembly and exon inclusion. Binding to 5'-YCAY-3' clusters results in a local and asymmetric action to regulate spliceosome assembly and alternative splicing in neurons. Binding to an exonic 5'-YCAY-3' cluster changed the protein complexes assembled on pre-mRNA, blocking U1 snRNP (small nuclear ribonucleoprotein) binding and exon inclusion, whereas binding to an intronic 5'-YCAY-3' cluster enhanced spliceosome assembly and exon inclusion. With NOVA1, they perform unique biological functions in different brain areas and cell types. Autoregulates its own expression by acting as a splicing repressor. Acts to activate the inclusion of exon E3A in the glycine receptor alpha-2 chain and of exon E9 in gamma-aminobutyric-acid receptor gamma-2 subunit via a distal downstream UCAU-rich intronic splicing enhancer. Acts to regulate a novel glycine receptor alpha-2 chain splice variant (alpha-2N) in developing spinal cord. In Homo sapiens (Human), this protein is RNA-binding protein Nova-1.